A 329-amino-acid chain; its full sequence is DNA-directed RNA polymerase subunit alpha (329 aa).

Residues 1 to 235 (MQNSIMDFLR…EQLEAFVDLR (235 aa)) are alpha N-terminal domain (alpha-NTD). An alpha C-terminal domain (alpha-CTD) region spans residues 249-329 (FEPILLRPVD…NWPPSSILDE (81 aa)).

The protein belongs to the RNA polymerase alpha chain family. Homodimer. The RNAP catalytic core consists of 2 alpha, 1 beta, 1 beta' and 1 omega subunit. When a sigma factor is associated with the core the holoenzyme is formed, which can initiate transcription.

It catalyses the reaction RNA(n) + a ribonucleoside 5'-triphosphate = RNA(n+1) + diphosphate. In terms of biological role, DNA-dependent RNA polymerase catalyzes the transcription of DNA into RNA using the four ribonucleoside triphosphates as substrates. This Buchnera aphidicola subsp. Acyrthosiphon pisum (strain APS) (Acyrthosiphon pisum symbiotic bacterium) protein is DNA-directed RNA polymerase subunit alpha.